Here is a 224-residue protein sequence, read N- to C-terminus: Glutathione S-transferase U4 (224 aa).

The GST N-terminal domain maps to 6–85 (EDVKLLGFWA…YIDQIWKNNP (80 aa)). Residues 16–17 (SP), 42–43 (NK), 56–57 (KV), and 69–70 (ES) each bind glutathione. Residues 90-217 (DPYEKAMALF…EEQIEHMKKV (128 aa)) enclose the GST C-terminal domain. T151 carries the post-translational modification Phosphothreonine.

Belongs to the GST superfamily. Tau family.

Its subcellular location is the cytoplasm. It is found in the cytosol. The enzyme catalyses RX + glutathione = an S-substituted glutathione + a halide anion + H(+). Its function is as follows. May be involved in the conjugation of reduced glutathione to a wide number of exogenous and endogenous hydrophobic electrophiles and have a detoxification role against certain herbicides. The chain is Glutathione S-transferase U4 (GSTU4) from Arabidopsis thaliana (Mouse-ear cress).